Reading from the N-terminus, the 406-residue chain is Elongation factor Tu, chloroplastic (406 aa).

Positions K8 to K210 constitute a tr-type G domain. GTP contacts are provided by residues G17–T24, D77–H81, and N132–D135. T24 contacts Mg(2+).

The protein belongs to the TRAFAC class translation factor GTPase superfamily. Classic translation factor GTPase family. EF-Tu/EF-1A subfamily. Monomer.

The protein localises to the plastid. Its subcellular location is the chloroplast. It catalyses the reaction GTP + H2O = GDP + phosphate + H(+). GTP hydrolase that promotes the GTP-dependent binding of aminoacyl-tRNA to the A-site of ribosomes during protein biosynthesis. In Chaetosphaeridium globosum (Charophycean green alga), this protein is Elongation factor Tu, chloroplastic (tufA).